A 245-amino-acid chain; its full sequence is Derlin-1 (245 aa).

At 1–17 the chain is on the cytoplasmic side; the sequence is MDAGVWYRSLPRFTRYW. Residues 18–38 form a helical membrane-spanning segment; the sequence is LTATVVLSMLCRFDVIPLHWL. The Lumenal segment spans residues 39–58; the sequence is HLDRSAVFSKLQLWRCMTSL. A helical transmembrane segment spans residues 59–79; the sequence is FVFPISSNTAFHFLINCFFIV. The Cytoplasmic segment spans residues 80–99; sequence QYSSKLEKDQYSRSPADYLY. Residues 100 to 120 form a helical membrane-spanning segment; it reads LLIVSAVLANIGGMIFNVYFL. Topologically, residues 121 to 156 are lumenal; that stretch reads MDTLVLAITYIWCQLNKDVTVSFWFGTRFKAMYLPW. The helical transmembrane segment at 157–177 threads the bilayer; sequence VLAAFEFIFHFSLASLVGIFV. The Cytoplasmic portion of the chain corresponds to 178–245; that stretch reads GHVYYFFKFQ…WGRGMTLGRN (68 aa). Residues 218–245 form a disordered region; the sequence is FGLPPESRAPPRQATESPWGRGMTLGRN.

Belongs to the derlin family.

It localises to the endoplasmic reticulum membrane. In terms of biological role, may be involved in the degradation process of specific misfolded endoplasmic reticulum (ER) luminal proteins. May also involved in endoplasmic reticulum stress-induced pre-emptive quality control, a mechanism that selectively attenuates the translocation of newly synthesized proteins into the endoplasmic reticulum and reroutes them to the cytosol for proteasomal degradation. The protein is Derlin-1 of Drosophila melanogaster (Fruit fly).